A 101-amino-acid chain; its full sequence is Urease subunit beta (101 aa).

This sequence belongs to the urease beta subunit family. Heterotrimer of UreA (gamma), UreB (beta) and UreC (alpha) subunits. Three heterotrimers associate to form the active enzyme.

The protein resides in the cytoplasm. The enzyme catalyses urea + 2 H2O + H(+) = hydrogencarbonate + 2 NH4(+). Its pathway is nitrogen metabolism; urea degradation; CO(2) and NH(3) from urea (urease route): step 1/1. The sequence is that of Urease subunit beta from Dechloromonas aromatica (strain RCB).